Here is a 617-residue protein sequence, read N- to C-terminus: Procollagen galactosyltransferase 1 (617 aa).

The N-terminal stretch at 1-31 (MAALPRGSRGLPLLPLLLLLPPLGGPRGADG) is a signal peptide. N-linked (GlcNAc...) asparagine glycosylation is found at asparagine 91, asparagine 179, and asparagine 376. Positions 582–601 (DRAKSQKMREQQALSREAKN) are enriched in basic and acidic residues. Positions 582–617 (DRAKSQKMREQQALSREAKNSDVLQSPLDSTARDEL) are disordered. The Prevents secretion from ER motif lies at 614 to 617 (RDEL).

This sequence belongs to the glycosyltransferase 25 family. N-glycosylated.

The protein localises to the endoplasmic reticulum lumen. It carries out the reaction (5R)-5-hydroxy-L-lysyl-[collagen] + UDP-alpha-D-galactose = (5R)-5-O-(beta-D-galactosyl)-5-hydroxy-L-lysyl-[collagen] + UDP + H(+). Functionally, beta-galactosyltransferase that transfers beta-galactose to hydroxylysine residues of type I collagen. By acting on collagen glycosylation, facilitates the formation of collagen triple helix. Also involved in the biosynthesis of collagen type IV. The polypeptide is Procollagen galactosyltransferase 1 (Colgalt1) (Mus musculus (Mouse)).